Reading from the N-terminus, the 102-residue chain is U3-aranetoxin-Ce1a (102 aa).

The signal sequence occupies residues 1–21 (MKHLSIFFVFFCCICVMLCDA).

Belongs to the neurotoxin 20 family. Expressed by the venom gland.

The protein localises to the secreted. This chain is U3-aranetoxin-Ce1a, found in Caerostris extrusa (Bark spider).